Reading from the N-terminus, the 180-residue chain is Protein PHLOEM PROTEIN 2-LIKE A9 (180 aa).

A disordered region spans residues 1 to 21 (MSSQKSSHHKADSKMEQDNNR). Residues 9–21 (HKADSKMEQDNNR) show a composition bias toward basic and acidic residues.

The chain is Protein PHLOEM PROTEIN 2-LIKE A9 (PP2A9) from Arabidopsis thaliana (Mouse-ear cress).